The chain runs to 299 residues: Tyrosine recombinase XerC (299 aa).

Residues 1–85 (MEQHLDAYCM…AVRGFYKYLN (85 aa)) form the Core-binding (CB) domain. A Tyr recombinase domain is found at 106 to 285 (RLPKTLDTDR…DFQHLATVYD (180 aa)). Catalysis depends on residues Arg-146, Lys-170, His-237, Arg-240, and His-263. The active-site O-(3'-phospho-DNA)-tyrosine intermediate is the Tyr-272.

It belongs to the 'phage' integrase family. XerC subfamily. In terms of assembly, forms a cyclic heterotetrameric complex composed of two molecules of XerC and two molecules of XerD.

It localises to the cytoplasm. Functionally, site-specific tyrosine recombinase, which acts by catalyzing the cutting and rejoining of the recombining DNA molecules. The XerC-XerD complex is essential to convert dimers of the bacterial chromosome into monomers to permit their segregation at cell division. It also contributes to the segregational stability of plasmids. In Pseudomonas syringae pv. tomato (strain ATCC BAA-871 / DC3000), this protein is Tyrosine recombinase XerC.